The chain runs to 439 residues: GTPase Der (439 aa).

2 consecutive EngA-type G domains span residues 4 to 169 and 177 to 352; these read AMVS…PQEE and IKIA…EEYN. GTP is bound by residues 10–17, 57–61, 120–123, 183–190, 230–234, and 295–298; these read GRPNVGKS, DTGGL, NKVD, GKPNVGKS, DTAGI, and NKWD. One can recognise a KH-like domain in the interval 353–437; sequence KRITTGLLNN…PIVISTKKRG (85 aa).

This sequence belongs to the TRAFAC class TrmE-Era-EngA-EngB-Septin-like GTPase superfamily. EngA (Der) GTPase family. Associates with the 50S ribosomal subunit.

GTPase that plays an essential role in the late steps of ribosome biogenesis. The polypeptide is GTPase Der (Thermoanaerobacter sp. (strain X514)).